The primary structure comprises 126 residues: Aspartate 1-decarboxylase (126 aa).

The active-site Schiff-base intermediate with substrate; via pyruvic acid is Ser-25. Ser-25 carries the post-translational modification Pyruvic acid (Ser). Thr-57 is a substrate binding site. Tyr-58 serves as the catalytic Proton donor. Gly-73–Ala-75 serves as a coordination point for substrate.

Belongs to the PanD family. Heterooctamer of four alpha and four beta subunits. Pyruvate serves as cofactor. In terms of processing, is synthesized initially as an inactive proenzyme, which is activated by self-cleavage at a specific serine bond to produce a beta-subunit with a hydroxyl group at its C-terminus and an alpha-subunit with a pyruvoyl group at its N-terminus.

The protein resides in the cytoplasm. The enzyme catalyses L-aspartate + H(+) = beta-alanine + CO2. It functions in the pathway cofactor biosynthesis; (R)-pantothenate biosynthesis; beta-alanine from L-aspartate: step 1/1. Its function is as follows. Catalyzes the pyruvoyl-dependent decarboxylation of aspartate to produce beta-alanine. This chain is Aspartate 1-decarboxylase, found in Acinetobacter baumannii (strain AB307-0294).